Reading from the N-terminus, the 95-residue chain is Transcription and mRNA export factor ENY2-1 (95 aa).

Belongs to the ENY2 family. In terms of assembly, component of the nuclear pore complex (NPC)-associated TREX-2 complex (transcription and export complex 2). Component of the SAGA transcription coactivator-HAT complex. Within the SAGA complex, participates in a subcomplex of SAGA called the DUB module (deubiquitination module).

The protein resides in the nucleus. It localises to the nucleoplasm. Functionally, involved in mRNA export coupled transcription activation by association with both the TREX-2 and the SAGA complexes. The transcription regulatory histone acetylation (HAT) complex SAGA is a multiprotein complex that activates transcription by remodeling chromatin and mediating histone acetylation and deubiquitination. Within the SAGA complex, participates in a subcomplex that specifically deubiquitinates histones. The SAGA complex is recruited to specific gene promoters by activators, where it is required for transcription. The TREX-2 complex functions in docking export-competent ribonucleoprotein particles (mRNPs) to the nuclear entrance of the nuclear pore complex (nuclear basket). TREX-2 participates in mRNA export and accurate chromatin positioning in the nucleus by tethering genes to the nuclear periphery. The protein is Transcription and mRNA export factor ENY2-1 (eny2-1) of Salmo salar (Atlantic salmon).